A 186-amino-acid chain; its full sequence is Ribosome-recycling factor (186 aa).

This sequence belongs to the RRF family.

It is found in the cytoplasm. Functionally, responsible for the release of ribosomes from messenger RNA at the termination of protein biosynthesis. May increase the efficiency of translation by recycling ribosomes from one round of translation to another. This Albidiferax ferrireducens (strain ATCC BAA-621 / DSM 15236 / T118) (Rhodoferax ferrireducens) protein is Ribosome-recycling factor.